A 347-amino-acid polypeptide reads, in one-letter code: NADH-quinone oxidoreductase subunit H (347 aa).

The next 9 helical transmembrane spans lie at 13–33 (LLIL…VAYI), 50–70 (PNVV…KFVF), 82–102 (GVFL…WAVI), 115–135 (VGIL…IMAG), 161–181 (IGFV…TDIV), 198–218 (FLDW…ISAL), 248–268 (FLLF…LTTI), 286–306 (VPGV…FALV), and 321–341 (LGWK…AAFL).

It belongs to the complex I subunit 1 family. As to quaternary structure, NDH-1 is composed of 14 different subunits. Subunits NuoA, H, J, K, L, M, N constitute the membrane sector of the complex.

The protein localises to the cell inner membrane. It carries out the reaction a quinone + NADH + 5 H(+)(in) = a quinol + NAD(+) + 4 H(+)(out). Functionally, NDH-1 shuttles electrons from NADH, via FMN and iron-sulfur (Fe-S) centers, to quinones in the respiratory chain. The immediate electron acceptor for the enzyme in this species is believed to be ubiquinone. Couples the redox reaction to proton translocation (for every two electrons transferred, four hydrogen ions are translocated across the cytoplasmic membrane), and thus conserves the redox energy in a proton gradient. This subunit may bind ubiquinone. This is NADH-quinone oxidoreductase subunit H from Chelativorans sp. (strain BNC1).